A 72-amino-acid chain; its full sequence is Large ribosomal subunit protein uL29 (72 aa).

It belongs to the universal ribosomal protein uL29 family.

The chain is Large ribosomal subunit protein uL29 from Prochlorococcus marinus (strain MIT 9312).